A 187-amino-acid chain; its full sequence is Probable GTP-binding protein EngB (187 aa).

One can recognise an EngB-type G domain in the interval 18–187 (KNSEIAFWGR…KLKENINSNF (170 aa)). Residues 26-33 (GRSNVGKS), 52-56 (GRTQL), 70-73 (DLPG), 137-140 (TKID), and 168-170 (VSS) each bind GTP. 2 residues coordinate Mg(2+): serine 33 and threonine 54.

Belongs to the TRAFAC class TrmE-Era-EngA-EngB-Septin-like GTPase superfamily. EngB GTPase family. The cofactor is Mg(2+).

Necessary for normal cell division and for the maintenance of normal septation. The protein is Probable GTP-binding protein EngB of Mycoplasmopsis synoviae (strain 53) (Mycoplasma synoviae).